Reading from the N-terminus, the 771-residue chain is MSVRNLTNNRHSNSENSVSGSENSFYSSNEQSRQSSSLEPADGQNVRVSGNPFLGSEEFDEDYNSPSGDDERRGANEYSSSSSINYNNDPNSDTSLLANEKNSPERNGQRMSDYKGYYAKTNLTSANNLNNHNNNNYKNIISSSNDNSFASHLQPPDRNLPSHPSSNNMSSFSNNSLIKSPPPFDRYPLVGTRHISAAQSQSQNLINEKKRANMTGSSSSAHDSSLSSTNLYMGEQDFSPFGGYPASFFPLTLDEKEDDDYIHNPNVEEEAKLDRRRFVDDFKHMDRRSFLGLLGILFLFMAGIFIFIVLPAITFSGVVYHHEHVHAANSAGSSSSNTTSKSLTEYQYPQLAAIRTTLVDPDTPDSAKTRVAKDGSKWQLVFSDEFNAEGRTFYDGDDQFWTAPDIHYDATKDLEWYSPDAVTTTNGTLTLRMDAFRNHDLYYRSGMVQSWNKLCFTEGALEVSANLPNYGRVTGLWPGMWTMGNLGRPGYLASTQGVWPYSYEACDAGITPNQSSPDGISYLPGQKLSVCTCDNEDHPNQGVGRGAPEIDILEGEADTILGVGVASQSLQIAPFDIWYMPDYDFIEVYNFTTTTMNTYAGGPFQQAVSAISTLNVTWYEFGEEAGYFQKYAIEYLNDDDNGYIRWFVGENPTFTLYATSLHPSGNIDWRRISKEPMSAILNLGISNNWAYIDWQYIFFPVTMSIDYVRLYQPKGSTSITCDPEDYPTYDYIQSHLNAYYNANLTDWEQAGYTFPKNILTGGCSSSKFSLS.

A compositionally biased stretch (polar residues) spans 1 to 11; it reads MSVRNLTNNRH. 2 disordered regions span residues 1–112 and 126–186; these read MSVR…QRMS and ANNL…PFDR. Residues 1–289 are Cytoplasmic-facing; the sequence is MSVRNLTNNR…DDFKHMDRRS (289 aa). Positions 14–37 are enriched in low complexity; sequence SENSVSGSENSFYSSNEQSRQSSS. Phosphoserine is present on residues S56, S65, S67, S92, S103, S142, S162, S165, S170, and S176. Over residues 76-93 the composition is skewed to low complexity; the sequence is NEYSSSSSINYNNDPNSD. Low complexity-rich tracts occupy residues 126 to 152 and 159 to 177; these read ANNL…FASH and NLPS…NNSL. A helical; Signal-anchor for type II membrane protein membrane pass occupies residues 290–310; that stretch reads FLGLLGILFLFMAGIFIFIVL. The Lumenal segment spans residues 311–771; it reads PAITFSGVVY…GCSSSKFSLS (461 aa). N-linked (GlcNAc...) asparagine glycosylation is found at N337, N426, N513, N590, N615, and N743. The GH16 domain occupies 353–716; that stretch reads AIRTTLVDPD…YVRLYQPKGS (364 aa).

Belongs to the SKN1/KRE6 family.

It localises to the membrane. In terms of biological role, required for synthesis of the major beta-glucans of the yeast cell wall. The sequence is that of Beta-glucan synthesis-associated protein SKN1 (SKN1) from Saccharomyces cerevisiae (strain ATCC 204508 / S288c) (Baker's yeast).